Here is a 248-residue protein sequence, read N- to C-terminus: 2,3-bisphosphoglycerate-dependent phosphoglycerate mutase (248 aa).

Substrate contacts are provided by residues 8–15 (RHGESTWN), 21–22 (TG), Arg60, 87–90 (ERHY), Lys98, 114–115 (RR), and 183–184 (GN). The Tele-phosphohistidine intermediate role is filled by His9. Glu87 functions as the Proton donor/acceptor in the catalytic mechanism.

The protein belongs to the phosphoglycerate mutase family. BPG-dependent PGAM subfamily.

It carries out the reaction (2R)-2-phosphoglycerate = (2R)-3-phosphoglycerate. The protein operates within carbohydrate degradation; glycolysis; pyruvate from D-glyceraldehyde 3-phosphate: step 3/5. In terms of biological role, catalyzes the interconversion of 2-phosphoglycerate and 3-phosphoglycerate. This Solibacter usitatus (strain Ellin6076) protein is 2,3-bisphosphoglycerate-dependent phosphoglycerate mutase.